The chain runs to 338 residues: Serpentine receptor class alpha-31 (338 aa).

7 consecutive transmembrane segments (helical) span residues 23-43 (GNHCFILLIIISSVFLTVFAI), 59-79 (LLFSAIINGVVHHWSIAGIRI), 108-125 (LYYYTNLFSSLCCISLFF), 142-162 (FSKIFLLFQSISPFGILYWIF), 188-208 (VNEFRLYILGTFFVLSFVIFF), 240-260 (VCIIIATQITCLVTTASTTEI), and 276-296 (SIAFMTGLTYSNFFLPIIIIY).

It belongs to the nematode receptor-like protein sra family.

It localises to the membrane. The chain is Serpentine receptor class alpha-31 (sra-31) from Caenorhabditis elegans.